The following is a 114-amino-acid chain: MVIRVYIASSSGSMAIKKKQQDVLGFLEANKIGFEEKDIAANEENRKWMRENVPENSRPATGYPLPPQIFNESQYRGDYDAFFEARENNAVYAFLGLTAPPGSKEAEAQAKQQA.

A required for interaction with HER2 region spans residues S13 to R50. The segment at P54–N71 is required for interaction with PFN1, HER2, and ATG12. An SH3-binding motif is present at residues T61 to P67.

Belongs to the SH3BGR family. As to quaternary structure, monomer. Interacts with PFN1/Profilin-1. Interacts with ERBB2. Interacts with ATG12. Interacts with BECN1. Interacts with translating ribosomes.

The protein resides in the cytoplasm. The protein localises to the cytosol. Its subcellular location is the cell membrane. Appears to function as an adapter protein that bridges proteins together or proteins with mRNAs. May function as a ubiquitin ligase-substrate adapter. Additionally, associates with translating cytoplasmic ribosomes and may promote the expression of specific mRNAs. This is Adapter SH3BGRL (SH3BGRL) from Bos taurus (Bovine).